The following is a 76-amino-acid chain: MQLVLAAKYIGAAISTIGTLGAGIGIAIVFAALINGTSRNPSLRNTLFPFAITGFALSEATGLFCLMVSFTLLYGV.

A run of 2 helical transmembrane segments spans residues 14–34 (ISTIGTLGAGIGIAIVFAALI) and 48–68 (FPFAITGFALSEATGLFCLMV).

The protein belongs to the ATPase C chain family. As to quaternary structure, F-type ATPases have 2 components, CF(1) - the catalytic core - and CF(0) - the membrane proton channel. CF(1) has five subunits: alpha(3), beta(3), gamma(1), delta(1), epsilon(1). CF(0) has three main subunits: a, b and c.

Its subcellular location is the mitochondrion membrane. Mitochondrial membrane ATP synthase (F(1)F(0) ATP synthase or Complex V) produces ATP from ADP in the presence of a proton gradient across the membrane which is generated by electron transport complexes of the respiratory chain. F-type ATPases consist of two structural domains, F(1) - containing the extramembraneous catalytic core and F(0) - containing the membrane proton channel, linked together by a central stalk and a peripheral stalk. During catalysis, ATP synthesis in the catalytic domain of F(1) is coupled via a rotary mechanism of the central stalk subunits to proton translocation. Part of the complex F(0) domain. A homomeric c-ring of probably 10 subunits is part of the complex rotary element. This chain is ATP synthase subunit 9, mitochondrial (ATP9), found in Cyberlindnera mrakii (Yeast).